We begin with the raw amino-acid sequence, 247 residues long: UPF0273 protein PH0284 (247 aa).

Positions 3 to 247 constitute a KaiC domain; sequence RRVKTGIPGV…VLKRGKVLEL (245 aa). An ATP-binding site is contributed by 30–37; sequence GGPGTGKT.

It belongs to the UPF0273 family.

In Pyrococcus horikoshii (strain ATCC 700860 / DSM 12428 / JCM 9974 / NBRC 100139 / OT-3), this protein is UPF0273 protein PH0284.